The sequence spans 177 residues: ATP synthase subunit delta (177 aa).

The protein belongs to the ATPase delta chain family. In terms of assembly, F-type ATPases have 2 components, F(1) - the catalytic core - and F(0) - the membrane proton channel. F(1) has five subunits: alpha(3), beta(3), gamma(1), delta(1), epsilon(1). F(0) has three main subunits: a(1), b(2) and c(10-14). The alpha and beta chains form an alternating ring which encloses part of the gamma chain. F(1) is attached to F(0) by a central stalk formed by the gamma and epsilon chains, while a peripheral stalk is formed by the delta and b chains.

The protein localises to the cell inner membrane. Functionally, f(1)F(0) ATP synthase produces ATP from ADP in the presence of a proton or sodium gradient. F-type ATPases consist of two structural domains, F(1) containing the extramembraneous catalytic core and F(0) containing the membrane proton channel, linked together by a central stalk and a peripheral stalk. During catalysis, ATP synthesis in the catalytic domain of F(1) is coupled via a rotary mechanism of the central stalk subunits to proton translocation. In terms of biological role, this protein is part of the stalk that links CF(0) to CF(1). It either transmits conformational changes from CF(0) to CF(1) or is implicated in proton conduction. This chain is ATP synthase subunit delta, found in Shewanella woodyi (strain ATCC 51908 / MS32).